We begin with the raw amino-acid sequence, 134 residues long: Replication enhancer protein (134 aa).

The protein belongs to the geminiviridae replication enhancer protein family. As to quaternary structure, homooligomer. Interacts with the replication-associated protein (REP). Interacts with host proliferating cell nuclear antigen (PCNA). Interacts with host retinoblastoma-related protein 1 (RBR1), and may thereby deregulate the host cell cycle. Oligomerization and interaction with PCNA are necessary for optimal replication enhancement.

Functionally, increases viral DNA accumulation. Enhances infectivity and symptom expression. This Manihot esculenta (Cassava) protein is Replication enhancer protein.